Consider the following 478-residue polypeptide: NADH-quinone oxidoreductase subunit N (478 aa).

The next 14 membrane-spanning stretches (helical) occupy residues 5–25, 37–57, 68–88, 99–119, 121–141, 156–176, 199–219, 231–251, 268–288, 293–313, 320–340, 365–385, 401–421, and 446–466; these read LASPEIVLALCGLVILLVGVA, MLTLGAFLVTGLLTVSGALGL, FAVMVKLLILSGASIAVVLSL, FEFPVLTLFSTVGMMVMVSAS, FMTLYMGLELMSLAIYVLAAF, FVLGSLASGLLLYGISLIYGF, LTVGVVFVIAGLAFKISAAPF, PTPVTAFMGTAPKVAAIAMML, VVALISVVSMVWGALAAIGQT, LMAYSSIGHMGYALVGLAAGS, LLIYLVTYVFMNTGTFACILA, ALLLAIFMFSMAGIPPMSGFF, LLWGLAVIGVLTSVIGAYYYL, and VVAVGSAIFTALFFLFPAPIL.

The protein belongs to the complex I subunit 2 family. In terms of assembly, NDH-1 is composed of 14 different subunits. Subunits NuoA, H, J, K, L, M, N constitute the membrane sector of the complex.

The protein resides in the cell inner membrane. It carries out the reaction a quinone + NADH + 5 H(+)(in) = a quinol + NAD(+) + 4 H(+)(out). Functionally, NDH-1 shuttles electrons from NADH, via FMN and iron-sulfur (Fe-S) centers, to quinones in the respiratory chain. The immediate electron acceptor for the enzyme in this species is believed to be ubiquinone. Couples the redox reaction to proton translocation (for every two electrons transferred, four hydrogen ions are translocated across the cytoplasmic membrane), and thus conserves the redox energy in a proton gradient. This Granulibacter bethesdensis (strain ATCC BAA-1260 / CGDNIH1) protein is NADH-quinone oxidoreductase subunit N.